A 68-amino-acid chain; its full sequence is Putative membrane protein insertion efficiency factor (68 aa).

The protein belongs to the UPF0161 family.

It is found in the cell inner membrane. Could be involved in insertion of integral membrane proteins into the membrane. The chain is Putative membrane protein insertion efficiency factor from Persephonella marina (strain DSM 14350 / EX-H1).